Here is a 189-residue protein sequence, read N- to C-terminus: Peptidyl-tRNA hydrolase (189 aa).

A tRNA-binding site is contributed by tyrosine 14. Histidine 19 functions as the Proton acceptor in the catalytic mechanism. TRNA is bound by residues tyrosine 64, asparagine 66, and asparagine 112.

This sequence belongs to the PTH family. As to quaternary structure, monomer.

It localises to the cytoplasm. The enzyme catalyses an N-acyl-L-alpha-aminoacyl-tRNA + H2O = an N-acyl-L-amino acid + a tRNA + H(+). In terms of biological role, hydrolyzes ribosome-free peptidyl-tRNAs (with 1 or more amino acids incorporated), which drop off the ribosome during protein synthesis, or as a result of ribosome stalling. Catalyzes the release of premature peptidyl moieties from peptidyl-tRNA molecules trapped in stalled 50S ribosomal subunits, and thus maintains levels of free tRNAs and 50S ribosomes. The polypeptide is Peptidyl-tRNA hydrolase (Dehalococcoides mccartyi (strain ATCC BAA-2266 / KCTC 15142 / 195) (Dehalococcoides ethenogenes (strain 195))).